The chain runs to 270 residues: Hydroxyethylthiazole kinase (270 aa).

Substrate is bound at residue M44. Residues R119 and T165 each coordinate ATP. Position 192 (G192) interacts with substrate.

The protein belongs to the Thz kinase family. Requires Mg(2+) as cofactor.

The enzyme catalyses 5-(2-hydroxyethyl)-4-methylthiazole + ATP = 4-methyl-5-(2-phosphooxyethyl)-thiazole + ADP + H(+). Its pathway is cofactor biosynthesis; thiamine diphosphate biosynthesis; 4-methyl-5-(2-phosphoethyl)-thiazole from 5-(2-hydroxyethyl)-4-methylthiazole: step 1/1. Catalyzes the phosphorylation of the hydroxyl group of 4-methyl-5-beta-hydroxyethylthiazole (THZ). The protein is Hydroxyethylthiazole kinase of Corynebacterium efficiens (strain DSM 44549 / YS-314 / AJ 12310 / JCM 11189 / NBRC 100395).